The sequence spans 360 residues: 3-isopropylmalate dehydrogenase (360 aa).

76–89 (GPKWDTIERDIRPE) provides a ligand contact to NAD(+). Substrate is bound by residues Arg96, Arg106, Arg134, and Asp224. Asp224, Asp248, and Asp252 together coordinate Mg(2+). 282–294 (GSAPDIAGKGIAN) lines the NAD(+) pocket.

It belongs to the isocitrate and isopropylmalate dehydrogenases family. LeuB type 1 subfamily. Homodimer. The cofactor is Mg(2+). Mn(2+) serves as cofactor.

The protein localises to the cytoplasm. The enzyme catalyses (2R,3S)-3-isopropylmalate + NAD(+) = 4-methyl-2-oxopentanoate + CO2 + NADH. It participates in amino-acid biosynthesis; L-leucine biosynthesis; L-leucine from 3-methyl-2-oxobutanoate: step 3/4. Functionally, catalyzes the oxidation of 3-carboxy-2-hydroxy-4-methylpentanoate (3-isopropylmalate) to 3-carboxy-4-methyl-2-oxopentanoate. The product decarboxylates to 4-methyl-2 oxopentanoate. The protein is 3-isopropylmalate dehydrogenase of Pseudomonas syringae pv. syringae (strain B728a).